The primary structure comprises 148 residues: Large ribosomal subunit protein bL9 (148 aa).

Belongs to the bacterial ribosomal protein bL9 family.

In terms of biological role, binds to the 23S rRNA. The sequence is that of Large ribosomal subunit protein bL9 from Ectopseudomonas mendocina (strain ymp) (Pseudomonas mendocina).